Reading from the N-terminus, the 228-residue chain is Leucyl/phenylalanyl-tRNA--protein transferase (228 aa).

The protein belongs to the L/F-transferase family.

Its subcellular location is the cytoplasm. It catalyses the reaction N-terminal L-lysyl-[protein] + L-leucyl-tRNA(Leu) = N-terminal L-leucyl-L-lysyl-[protein] + tRNA(Leu) + H(+). The catalysed reaction is N-terminal L-arginyl-[protein] + L-leucyl-tRNA(Leu) = N-terminal L-leucyl-L-arginyl-[protein] + tRNA(Leu) + H(+). The enzyme catalyses L-phenylalanyl-tRNA(Phe) + an N-terminal L-alpha-aminoacyl-[protein] = an N-terminal L-phenylalanyl-L-alpha-aminoacyl-[protein] + tRNA(Phe). Functionally, functions in the N-end rule pathway of protein degradation where it conjugates Leu, Phe and, less efficiently, Met from aminoacyl-tRNAs to the N-termini of proteins containing an N-terminal arginine or lysine. The polypeptide is Leucyl/phenylalanyl-tRNA--protein transferase (Thiobacillus denitrificans (strain ATCC 25259 / T1)).